The chain runs to 275 residues: Seminase (275 aa).

Positions 1-19 are cleaved as a signal peptide; it reads MKRLLFLFLLAGILINNHA. An N-linked (GlcNAc...) asparagine glycan is attached at asparagine 23. The 225-residue stretch at 44-268 folds into the Peptidase S1 domain; that stretch reads VIGGRVTTNA…VKPFIVKGIK (225 aa). Cysteine 70 and cysteine 86 are joined by a disulfide. Active-site charge relay system residues include histidine 85 and aspartate 131. Cystine bridges form between cysteine 194–cysteine 210 and cysteine 220–cysteine 244. Catalysis depends on serine 224, which acts as the Charge relay system.

It belongs to the peptidase S1 family. Undergoes cleavage in the male during mating with a cleaved product detected in the ejaculatory duct and/or bulb of males by 8-10 minutes after the start of mating. Further cleavage occurs in the mated female. Produced in the male accessory glands and secreted into seminal fluid.

The protein localises to the secreted. In terms of biological role, seminal fluid protease which is required for cleavage and probably also activation of the metalloprotease Semp1. Also required for a number of female post-mating responses independent of Semp1 including egg laying and sperm usage. This chain is Seminase, found in Drosophila melanogaster (Fruit fly).